We begin with the raw amino-acid sequence, 240 residues long: Probable transcriptional regulatory protein Hac_0344 (240 aa).

It belongs to the TACO1 family.

The protein localises to the cytoplasm. The polypeptide is Probable transcriptional regulatory protein Hac_0344 (Helicobacter acinonychis (strain Sheeba)).